Consider the following 62-residue polypeptide: Large ribosomal subunit protein bL28 (62 aa).

It belongs to the bacterial ribosomal protein bL28 family.

The protein is Large ribosomal subunit protein bL28 of Staphylococcus epidermidis (strain ATCC 12228 / FDA PCI 1200).